A 741-amino-acid chain; its full sequence is G2 and S phase-expressed protein 1 (741 aa).

A Phosphoserine modification is found at serine 73. 3 disordered regions span residues 101–120 (EVAQ…ETFV), 131–428 (EKEQ…KTVS), and 450–512 (FKVP…STRR). Positions 106-120 (ATPQNPVNQGKETFV) are enriched in polar residues. Residues 131–147 (EKEQKRDRSPMSLKRET) show a composition bias toward basic and acidic residues. Serine 139, serine 153, serine 191, and serine 245 each carry phosphoserine. Residues 173 to 209 (SPVSAGPAQTQSNQGLPCSSQPLPRESSTSQPPSQAG) are compositionally biased toward polar residues. The segment covering 246 to 261 (IQRTKLVNEKGSQSDV) has biased composition (polar residues). Over residues 310-321 (SSTSGSASSLES) the composition is skewed to low complexity. Serine 311 is subject to Phosphoserine. Residues 337-355 (QRSSIPASGSQRRTSTSKS) are compositionally biased toward polar residues. Over residues 360–372 (PAASRQALPAAPA) the composition is skewed to low complexity. A compositionally biased stretch (polar residues) spans 398 to 408 (SPLTQQPQTPE). Serine 460 carries the post-translational modification Phosphoserine. Threonine 465 is modified (phosphothreonine). Phosphoserine occurs at positions 476, 493, 509, and 514. The span at 478 to 497 (TPASRVVSSTPVRRSSGTTP) shows a compositional bias: low complexity. Threonine 518 is modified (phosphothreonine). Serine 521, serine 541, serine 582, and serine 599 each carry phosphoserine. The segment at 550–640 (LSSEPRRRST…VHGGGCSHTP (91 aa)) is disordered. Residues 578 to 593 (QGLSSDESSSPPSSVP) are compositionally biased toward low complexity. Phosphothreonine is present on threonine 696. A phosphoserine mark is found at serine 720, serine 726, and serine 736.

In terms of processing, phosphorylated in mitosis.

It is found in the cytoplasm. The protein localises to the cytoskeleton. Functionally, may be involved in p53-induced cell cycle arrest in G2/M phase by interfering with microtubule rearrangements that are required to enter mitosis. Overexpression delays G2/M phase progression. The protein is G2 and S phase-expressed protein 1 (Gtse1) of Mus musculus (Mouse).